Reading from the N-terminus, the 197-residue chain is Large ribosomal subunit protein uL18 (197 aa).

Belongs to the universal ribosomal protein uL18 family. Part of the 50S ribosomal subunit. Contacts the 5S and 23S rRNAs.

In terms of biological role, this is one of the proteins that bind and probably mediate the attachment of the 5S RNA into the large ribosomal subunit, where it forms part of the central protuberance. The polypeptide is Large ribosomal subunit protein uL18 (Sulfolobus acidocaldarius (strain ATCC 33909 / DSM 639 / JCM 8929 / NBRC 15157 / NCIMB 11770)).